The following is a 518-amino-acid chain: T-box transcription factor TBX5 (518 aa).

A disordered region spans residues M1–F46. Residues L15–P28 are compositionally biased toward basic and acidic residues. Positions A34 to A45 are enriched in low complexity. Positions L58–G238 form a DNA-binding region, T-box. Residues M250–S356 form a disordered region. Polar residues predominate over residues T262–S301. K339 is subject to N6-acetyllysine.

Monomer. Homodimer (via the T-box); binds DNA as homodimer. Interacts (via the T-box) with NKX2-5 (via the homeobox); this complex binds DNA. Interacts with GATA4. Interacts with KAT2A and KAT2B. Acetylation at Lys-339 by KAT2A and KAT2B promotes nuclear retention.

It is found in the nucleus. It localises to the cytoplasm. Functionally, DNA-binding protein that regulates the transcription of several genes and is involved in heart development and limb pattern formation. Binds to the core DNA motif of NPPA promoter. The polypeptide is T-box transcription factor TBX5 (TBX5) (Homo sapiens (Human)).